A 304-amino-acid polypeptide reads, in one-letter code: Recombination-associated protein RdgC (304 aa).

Belongs to the RdgC family.

Its subcellular location is the cytoplasm. The protein resides in the nucleoid. Its function is as follows. May be involved in recombination. This is Recombination-associated protein RdgC from Shewanella sp. (strain W3-18-1).